A 282-amino-acid chain; its full sequence is (4-alkanoyl-5-oxo-2,5-dihydrofuran-3-yl)methyl phosphate reductase (282 aa).

Residue 6–11 (GATGAV) coordinates NADP(+).

The protein belongs to the NmrA-type oxidoreductase family.

The catalysed reaction is a [(3S,4R)-4-alkanoyl-5-oxooxolan-3-yl]methyl phosphate + NADP(+) = a (4-alkanoyl-5-oxo-2,5-dihydrofuran-3-yl)methyl phosphate + NADPH + H(+). It catalyses the reaction [(3S,4R)-4-(6-methylheptanoyl)-5-oxooxolan-3-yl]methyl phosphate + NADP(+) = [4-(6-methylheptanoyl)-5-oxo-2H-furan-3-yl]methyl phosphate + NADPH + H(+). Functionally, involved in the biosynthesis of A factor (2-isocapryloyl-3R-hydroxymethyl-gamma-butyrolactone), a gamma-butyrolactone autoregulator that triggers secondary metabolism and morphogenesis in Streptomyces. Catalyzes the reduction of the butenolide phosphate produced by nonenzymatic intramolecular condensation of the 8-methyl-3-oxononanoyl-DHAP ester. The chain is (4-alkanoyl-5-oxo-2,5-dihydrofuran-3-yl)methyl phosphate reductase from Streptomyces griseus subsp. griseus (strain JCM 4626 / CBS 651.72 / NBRC 13350 / KCC S-0626 / ISP 5235).